The following is a 309-amino-acid chain: Probable 3-hydroxyacyl-CoA dehydrogenase B0272.3 (309 aa).

It belongs to the 3-hydroxyacyl-CoA dehydrogenase family. As to quaternary structure, homodimer.

It is found in the mitochondrion matrix. The catalysed reaction is a (3S)-3-hydroxyacyl-CoA + NAD(+) = a 3-oxoacyl-CoA + NADH + H(+). It participates in lipid metabolism; fatty acid beta-oxidation. The sequence is that of Probable 3-hydroxyacyl-CoA dehydrogenase B0272.3 from Caenorhabditis elegans.